The chain runs to 285 residues: tRNA (adenine(58)-N(1))-methyltransferase catalytic subunit TRMT61A (285 aa).

An N-acetylserine modification is found at Ser2. Substrate regions lie at residues 20-22 (LGH), 35-42 (QTQTRHGV), 64-65 (GW), 85-89 (QILYS), and 110-117 (SGTGSGSV). Residues Leu87, 114 to 116 (SGS), Glu135, Arg140, 163 to 164 (DV), and Asp181 each bind S-adenosyl-L-methionine. Substrate regions lie at residues 180–183 (LDIP) and 205–212 (SFSPCIEQ). Position 274 (Thr274) interacts with substrate.

It belongs to the class I-like SAM-binding methyltransferase superfamily. TRM61 family. Heterotetramer; composed of two copies of TRMT6 and two copies of TRMT61A.

It is found in the nucleus. It catalyses the reaction adenosine(58) in tRNA + S-adenosyl-L-methionine = N(1)-methyladenosine(58) in tRNA + S-adenosyl-L-homocysteine + H(+). The catalysed reaction is an adenosine in mRNA + S-adenosyl-L-methionine = an N(1)-methyladenosine in mRNA + S-adenosyl-L-homocysteine + H(+). Catalytic subunit of tRNA (adenine-N(1)-)-methyltransferase, which catalyzes the formation of N(1)-methyladenine at position 58 (m1A58) in initiator methionyl-tRNA. Catalytic subunit of mRNA N(1)-methyltransferase complex, which mediates methylation of adenosine residues at the N(1) position of a small subset of mRNAs: N(1) methylation takes place in tRNA T-loop-like structures of mRNAs and is only present at low stoichiometries. This is tRNA (adenine(58)-N(1))-methyltransferase catalytic subunit TRMT61A (TRMT61A) from Bos taurus (Bovine).